We begin with the raw amino-acid sequence, 497 residues long: UDP-N-acetylmuramoyl-L-alanyl-D-glutamate--2,6-diaminopimelate ligase (497 aa).

Position 29 (Ser29) interacts with UDP-N-acetyl-alpha-D-muramoyl-L-alanyl-D-glutamate. 116-122 (GTNGKTT) contributes to the ATP binding site. UDP-N-acetyl-alpha-D-muramoyl-L-alanyl-D-glutamate is bound by residues Asn157, 158–159 (TT), Ser185, Gln191, and Arg193. N6-carboxylysine is present on Lys225. Meso-2,6-diaminopimelate-binding positions include Arg392, 416-419 (DNPR), Gly467, and Glu471. Positions 416-419 (DNPR) match the Meso-diaminopimelate recognition motif motif.

It belongs to the MurCDEF family. MurE subfamily. The cofactor is Mg(2+). In terms of processing, carboxylation is probably crucial for Mg(2+) binding and, consequently, for the gamma-phosphate positioning of ATP.

The protein resides in the cytoplasm. It catalyses the reaction UDP-N-acetyl-alpha-D-muramoyl-L-alanyl-D-glutamate + meso-2,6-diaminopimelate + ATP = UDP-N-acetyl-alpha-D-muramoyl-L-alanyl-gamma-D-glutamyl-meso-2,6-diaminopimelate + ADP + phosphate + H(+). It functions in the pathway cell wall biogenesis; peptidoglycan biosynthesis. In terms of biological role, catalyzes the addition of meso-diaminopimelic acid to the nucleotide precursor UDP-N-acetylmuramoyl-L-alanyl-D-glutamate (UMAG) in the biosynthesis of bacterial cell-wall peptidoglycan. The protein is UDP-N-acetylmuramoyl-L-alanyl-D-glutamate--2,6-diaminopimelate ligase of Buchnera aphidicola subsp. Acyrthosiphon pisum (strain APS) (Acyrthosiphon pisum symbiotic bacterium).